We begin with the raw amino-acid sequence, 216 residues long: Guanylate kinase (216 aa).

The Guanylate kinase-like domain maps to 15 to 193 (GNLFMVVAPS…ALEELRNVVR (179 aa)). Residue 22–29 (APSGAGKS) participates in ATP binding.

This sequence belongs to the guanylate kinase family.

It localises to the cytoplasm. It carries out the reaction GMP + ATP = GDP + ADP. Its function is as follows. Essential for recycling GMP and indirectly, cGMP. This Cupriavidus pinatubonensis (strain JMP 134 / LMG 1197) (Cupriavidus necator (strain JMP 134)) protein is Guanylate kinase.